A 274-amino-acid polypeptide reads, in one-letter code: Cytochrome c oxidase subunit 3 (274 aa).

At 2-15 the chain is on the cytoplasmic side; the sequence is AHVKNHDYQILPPS. The chain crosses the membrane as a helical span at residues 16–36; sequence IWPFFGAIGAFVMLTGAVAWM. The Periplasmic portion of the chain corresponds to 37–48; it reads KGITFFGLPVEG. The chain crosses the membrane as a helical span at residues 49–77; the sequence is PWMFLIGLVGVLYVMFGWWADVVNEGETG. Over 78–79 the chain is Cytoplasmic; the sequence is EH. Residues 80 to 115 traverse the membrane as a helical segment; it reads TPVVRIGLQYGFILFIMSEVMFFVAWFWAFIKNALY. The Periplasmic portion of the chain corresponds to 116–139; it reads PMGPDSPIKDGVWPPEGIVTFDPW. The helical transmembrane segment at 140 to 166 threads the bilayer; it reads HLPLINTLILLLSGVAVTWAHHAFVLE. Over 167–168 the chain is Cytoplasmic; sequence GD. Residues 169–197 traverse the membrane as a helical segment; it reads RKTTINGLIVAVILGVCFTGLQAYEYSHA. Residues 198-203 lie on the Periplasmic side of the membrane; the sequence is AFGLAD. A helical transmembrane segment spans residues 204–237; that stretch reads TVYAGAFYMATGFHGAHVIIGTIFLFVCLIRLLK. Topologically, residues 238-244 are cytoplasmic; the sequence is GQMTQKQ. The chain crosses the membrane as a helical span at residues 245-274; that stretch reads HVGFEAAAWYWHFVDVVWLFLFVVIYIWGR.

The protein belongs to the cytochrome c oxidase subunit 3 family.

The protein localises to the cell inner membrane. It carries out the reaction 4 Fe(II)-[cytochrome c] + O2 + 8 H(+)(in) = 4 Fe(III)-[cytochrome c] + 2 H2O + 4 H(+)(out). This chain is Cytochrome c oxidase subunit 3 (ctaE), found in Paracoccus denitrificans.